A 445-amino-acid polypeptide reads, in one-letter code: Tubulin beta-3 chain (445 aa).

GTP-binding residues include Gln-11, Glu-69, Ser-138, Gly-142, Thr-143, Gly-144, Asn-204, and Asn-226. Residue Glu-69 participates in Mg(2+) binding. Residues 425 to 445 are disordered; it reads YQDATAEEYDEEEQDGEEEHD. The span at 429 to 445 shows a compositional bias: acidic residues; sequence TAEEYDEEEQDGEEEHD.

This sequence belongs to the tubulin family. In terms of assembly, dimer of alpha and beta chains. A typical microtubule is a hollow water-filled tube with an outer diameter of 25 nm and an inner diameter of 15 nM. Alpha-beta heterodimers associate head-to-tail to form protofilaments running lengthwise along the microtubule wall with the beta-tubulin subunit facing the microtubule plus end conferring a structural polarity. Microtubules usually have 13 protofilaments but different protofilament numbers can be found in some organisms and specialized cells. Requires Mg(2+) as cofactor.

Its subcellular location is the cytoplasm. The protein localises to the cytoskeleton. Tubulin is the major constituent of microtubules, a cylinder consisting of laterally associated linear protofilaments composed of alpha- and beta-tubulin heterodimers. Microtubules grow by the addition of GTP-tubulin dimers to the microtubule end, where a stabilizing cap forms. Below the cap, tubulin dimers are in GDP-bound state, owing to GTPase activity of alpha-tubulin. The chain is Tubulin beta-3 chain (TUBB3) from Zea mays (Maize).